A 214-amino-acid polypeptide reads, in one-letter code: Protein get-1 (214 aa).

Residues 1–4 (MPSL) lie on the Lumenal side of the membrane. A helical membrane pass occupies residues 5 to 24 (LVVIFVIELFVQLVNTIGAA). Topologically, residues 25–110 (TINNLLWRIA…KFDRTLTTVR (86 aa)) are cytoplasmic. Residues 73 to 107 (KWARLRRQHDKLLEDLEKRKKELDAAKTKFDRTLT) adopt a coiled-coil conformation. The chain crosses the membrane as a helical span at residues 111–131 (VVATRGLQWFLPFWYSREPMF). The Lumenal segment spans residues 132-155 (WLPYGWFPYYVEWFASFPRAPLGS). Residues 156–172 (VSIVVWQWACTGVIKLV) form a helical membrane-spanning segment. At 173–214 (IETVMAVVGLIVAARQKQQEKQKAKQAVPAAGGGDSKAEEAK) the chain is on the cytoplasmic side. Residues 190–214 (QQEKQKAKQAVPAAGGGDSKAEEAK) are disordered.

The protein belongs to the WRB/GET1 family. As to quaternary structure, interacts with GET3.

The protein localises to the endoplasmic reticulum membrane. Functionally, required for the post-translational delivery of tail-anchored (TA) proteins to the endoplasmic reticulum. Acts as a membrane receptor for soluble GET3, which recognizes and selectively binds the transmembrane domain of TA proteins in the cytosol. The chain is Protein get-1 (get-1) from Neurospora crassa (strain ATCC 24698 / 74-OR23-1A / CBS 708.71 / DSM 1257 / FGSC 987).